Here is a 468-residue protein sequence, read N- to C-terminus: Proline--tRNA ligase (468 aa).

This sequence belongs to the class-II aminoacyl-tRNA synthetase family. ProS type 3 subfamily. As to quaternary structure, homodimer.

The protein localises to the cytoplasm. It carries out the reaction tRNA(Pro) + L-proline + ATP = L-prolyl-tRNA(Pro) + AMP + diphosphate. Its function is as follows. Catalyzes the attachment of proline to tRNA(Pro) in a two-step reaction: proline is first activated by ATP to form Pro-AMP and then transferred to the acceptor end of tRNA(Pro). The sequence is that of Proline--tRNA ligase from Frankia alni (strain DSM 45986 / CECT 9034 / ACN14a).